The following is a 311-amino-acid chain: tRNA pseudouridine synthase B (311 aa).

The active-site Nucleophile is D39. The interval 237-268 (RELSEQETTEISFGRRIAAGPGAGTPDAATAE) is disordered. Residues 254-268 (AAGPGAGTPDAATAE) are compositionally biased toward low complexity.

This sequence belongs to the pseudouridine synthase TruB family. Type 1 subfamily.

It catalyses the reaction uridine(55) in tRNA = pseudouridine(55) in tRNA. In terms of biological role, responsible for synthesis of pseudouridine from uracil-55 in the psi GC loop of transfer RNAs. In Paenarthrobacter aurescens (strain TC1), this protein is tRNA pseudouridine synthase B.